Consider the following 290-residue polypeptide: Acetylglutamate kinase (290 aa).

Substrate contacts are provided by residues 65-66, arginine 87, and asparagine 186; that span reads GG.

This sequence belongs to the acetylglutamate kinase family. ArgB subfamily.

Its subcellular location is the cytoplasm. It carries out the reaction N-acetyl-L-glutamate + ATP = N-acetyl-L-glutamyl 5-phosphate + ADP. The protein operates within amino-acid biosynthesis; L-arginine biosynthesis; N(2)-acetyl-L-ornithine from L-glutamate: step 2/4. Functionally, catalyzes the ATP-dependent phosphorylation of N-acetyl-L-glutamate. The sequence is that of Acetylglutamate kinase from Mycolicibacterium gilvum (strain PYR-GCK) (Mycobacterium gilvum (strain PYR-GCK)).